We begin with the raw amino-acid sequence, 241 residues long: Sugar fermentation stimulation protein homolog (241 aa).

Belongs to the SfsA family.

The protein is Sugar fermentation stimulation protein homolog of Halorhodospira halophila (strain DSM 244 / SL1) (Ectothiorhodospira halophila (strain DSM 244 / SL1)).